The primary structure comprises 157 residues: Small ribosomal subunit protein uS7 (157 aa).

It belongs to the universal ribosomal protein uS7 family. In terms of assembly, part of the 30S ribosomal subunit. Contacts proteins S9 and S11.

In terms of biological role, one of the primary rRNA binding proteins, it binds directly to 16S rRNA where it nucleates assembly of the head domain of the 30S subunit. Is located at the subunit interface close to the decoding center, probably blocks exit of the E-site tRNA. This Francisella tularensis subsp. tularensis (strain FSC 198) protein is Small ribosomal subunit protein uS7.